Consider the following 353-residue polypeptide: Ferrochelatase (353 aa).

Residues His223 and Glu304 each coordinate Fe cation.

The protein belongs to the ferrochelatase family.

It is found in the cytoplasm. The catalysed reaction is heme b + 2 H(+) = protoporphyrin IX + Fe(2+). Its pathway is porphyrin-containing compound metabolism; protoheme biosynthesis; protoheme from protoporphyrin-IX: step 1/1. Its function is as follows. Catalyzes the ferrous insertion into protoporphyrin IX. This chain is Ferrochelatase, found in Mesorhizobium japonicum (strain LMG 29417 / CECT 9101 / MAFF 303099) (Mesorhizobium loti (strain MAFF 303099)).